The following is a 2084-amino-acid chain: RNA-directed RNA polymerase L (2084 aa).

Positions 20–221 (EPGLYDQIYD…IELQKSEEEL (202 aa)) are endonuclease. The Mn(2+) site is built by histidine 80, aspartate 112, and glutamate 126. The active-site For endonuclease activity is lysine 145. The RdRp catalytic domain occupies 969-1172 (SARSLGPGSI…FGIYSSEKST (204 aa)). Mg(2+) is bound at residue aspartate 1127. Positions 1695 to 1810 (AQSGTLGGFS…TDGCPVRIME (116 aa)) are cap-binding.

It belongs to the Bunyavirales RNA polymerase family. Homomultimer. Interacts with the glycoprotein N; this interaction allows efficient polymerase packaging into virus particles. Interacts with nucleoprotein N. The cofactor is Mn(2+). Mg(2+) serves as cofactor.

It is found in the host Golgi apparatus. The protein localises to the host endoplasmic reticulum. It localises to the host endoplasmic reticulum-Golgi intermediate compartment. Its subcellular location is the virion. The catalysed reaction is RNA(n) + a ribonucleoside 5'-triphosphate = RNA(n+1) + diphosphate. With respect to regulation, inhibited by Baloxavir acid (BXA). Its function is as follows. RNA-dependent RNA polymerase, which is responsible for the replication and transcription of the viral RNA genome using antigenomic RNA as an intermediate. During transcription, synthesizes subgenomic RNAs and assures their capping by a cap-snatching mechanism, which involves the endonuclease activity cleaving the host capped pre-mRNAs. These short capped RNAs are then used as primers for viral transcription. The 3'-end of subgenomic mRNAs molecules are not polyadenylated. During replication, the polymerase binds the 5' and 3' vRNA extremities at distinct sites. In turn, significant conformational changes occur in the polymerase and in vRNA to initiate active RNA synthesis. As a consequence of the use of the same enzyme for both transcription and replication, these mechanisms need to be well coordinated. In Dabie bandavirus (Severe fever with thrombocytopenia virus), this protein is RNA-directed RNA polymerase L.